A 282-amino-acid chain; its full sequence is NADH-ubiquinone oxidoreductase chain 2 (282 aa).

The next 7 membrane-spanning stretches (helical) occupy residues 17 to 37, 58 to 78, 87 to 107, 115 to 135, 166 to 186, 202 to 222, and 232 to 252; these read ILTNNVIVWWSIFLLMTVVFI, SLGLLFLLCSGGLLQFFIILL, FWIFNVTNNIFNYGLMWFLTF, ILLQIFWLSSVYILLFGLLIC, FSMFNTFYLFIYYFVLMVLLI, TTLVFLNIPFSVSFFVKIFSL, and FTLFLLFTMFLSVLAFSFWLI.

The protein belongs to the complex I subunit 2 family.

It localises to the mitochondrion inner membrane. It catalyses the reaction a ubiquinone + NADH + 5 H(+)(in) = a ubiquinol + NAD(+) + 4 H(+)(out). Its function is as follows. Core subunit of the mitochondrial membrane respiratory chain NADH dehydrogenase (Complex I) that is believed to belong to the minimal assembly required for catalysis. Complex I functions in the transfer of electrons from NADH to the respiratory chain. The immediate electron acceptor for the enzyme is believed to be ubiquinone. In Caenorhabditis elegans, this protein is NADH-ubiquinone oxidoreductase chain 2.